A 268-amino-acid polypeptide reads, in one-letter code: Glucosamine-6-phosphate deaminase (268 aa).

D67 acts as the Proton acceptor; for enolization step in catalysis. Residue N137 is the For ring-opening step of the active site. H139 acts as the Proton acceptor; for ring-opening step in catalysis. The active-site For ring-opening step is E144.

This sequence belongs to the glucosamine/galactosamine-6-phosphate isomerase family. NagB subfamily. As to quaternary structure, homohexamer.

It carries out the reaction alpha-D-glucosamine 6-phosphate + H2O = beta-D-fructose 6-phosphate + NH4(+). The protein operates within amino-sugar metabolism; N-acetylneuraminate degradation; D-fructose 6-phosphate from N-acetylneuraminate: step 5/5. In terms of biological role, catalyzes the reversible isomerization-deamination of glucosamine 6-phosphate (GlcN6P) to form fructose 6-phosphate (Fru6P) and ammonium ion. This chain is Glucosamine-6-phosphate deaminase, found in Colwellia psychrerythraea (strain 34H / ATCC BAA-681) (Vibrio psychroerythus).